The primary structure comprises 446 residues: Na(+)-translocating NADH-quinone reductase subunit A (446 aa).

It belongs to the NqrA family. Composed of six subunits; NqrA, NqrB, NqrC, NqrD, NqrE and NqrF.

The enzyme catalyses a ubiquinone + n Na(+)(in) + NADH + H(+) = a ubiquinol + n Na(+)(out) + NAD(+). Functionally, NQR complex catalyzes the reduction of ubiquinone-1 to ubiquinol by two successive reactions, coupled with the transport of Na(+) ions from the cytoplasm to the periplasm. NqrA to NqrE are probably involved in the second step, the conversion of ubisemiquinone to ubiquinol. The chain is Na(+)-translocating NADH-quinone reductase subunit A from Vibrio anguillarum (Listonella anguillarum).